The following is a 117-amino-acid chain: Appetite-regulating hormone (117 aa).

An N-terminal signal peptide occupies residues methionine 1–alanine 23. The O-decanoyl serine; alternate moiety is linked to residue serine 26. The O-hexanoyl serine; alternate moiety is linked to residue serine 26. A lipid anchor (O-octanoyl serine; alternate) is attached at serine 26. The disordered stretch occupies residues serine 29–alanine 52. Positions glutamate 31–lysine 43 are enriched in basic and acidic residues. The propeptide at alanine 52–arginine 75 is removed in mature form. At leucine 98 the chain carries Leucine amide. The propeptide at glycine 99–glutamate 117 is removed in mature form.

Belongs to the motilin family. O-octanoylated by GOAT/MBOAT4. O-octanoylation or O-decanoylation is essential for ghrelin activity. The O-decanoylated forms Ghrelin-27-C10 and Ghrelin-28-C10 differ in the length of the carbon backbone of the carboxylic acid bound to Ser-26. A small fraction of ghrelin, ghrelin-27-C10:1, ghrelin-27-C10:2, ghrelin-28-C8:1, ghrelin-28-C10:1, and ghrelin-28-C10:2, may be modified with singly or doubly unsaturated carboxylic acids. Post-translationally, amidation of Leu-98 is essential for obestatin activity.

It localises to the secreted. Ghrelin is the ligand for growth hormone secretagogue receptor type 1 (GHSR). Induces the release of growth hormone from the pituitary. Has an appetite-stimulating effect, induces adiposity and stimulates gastric acid secretion. Involved in growth regulation. In terms of biological role, obestatin may be the ligand for GPR39. May have an appetite-reducing effect resulting in decreased food intake. May reduce gastric emptying activity and jejunal motility. The sequence is that of Appetite-regulating hormone (GHRL) from Felis catus (Cat).